A 900-amino-acid polypeptide reads, in one-letter code: Isoleucine--tRNA ligase (900 aa).

The 'HIGH' region signature appears at 59–69 (PYANGNIHMGH). E550 is a binding site for L-isoleucyl-5'-AMP. A 'KMSKS' region motif is present at residues 591-595 (KMSKS). K594 lines the ATP pocket. 4 residues coordinate Zn(2+): C876, C879, C892, and C895.

The protein belongs to the class-I aminoacyl-tRNA synthetase family. IleS type 1 subfamily. Monomer. Requires Zn(2+) as cofactor.

Its subcellular location is the cytoplasm. The catalysed reaction is tRNA(Ile) + L-isoleucine + ATP = L-isoleucyl-tRNA(Ile) + AMP + diphosphate. Catalyzes the attachment of isoleucine to tRNA(Ile). As IleRS can inadvertently accommodate and process structurally similar amino acids such as valine, to avoid such errors it has two additional distinct tRNA(Ile)-dependent editing activities. One activity is designated as 'pretransfer' editing and involves the hydrolysis of activated Val-AMP. The other activity is designated 'posttransfer' editing and involves deacylation of mischarged Val-tRNA(Ile). The protein is Isoleucine--tRNA ligase of Onion yellows phytoplasma (strain OY-M).